A 568-amino-acid chain; its full sequence is MEREASSWGLESRDVHSPNAVGSPEGSLKDPAGNTSENEEGEISQREGNGDYEVEEIPFGLEPQSPEFEPQSPEFESQSPRFEPESPGFESRSPGFVPPSPEFAPRSPESDPQSPEFESQSPKYEPRSPGCHPRSPGCEPGSPRYEPKSPGYGSKSPEFESQSPGYESQSPGYEPQNSGDGVQNSEFKTHSPEFETQSSKFQEGAEMPLSPEEKNPLSISLGVHPLDSFTQGFGEQPTGALPPFDMPSGALLAAPQFEMLQNPLNLTGTLRGPGRRGGRARGGQGPRPNICGICGKSFGRGSTLIQHQRIHTGEKPYKCEVCSKAFSQSSDLIKHQRTHTGERPYKCPRCGKAFADSSYLLRHQRTHSGQKPYKCPHCGKAFGDSSYLLRHQRTHSHERPYSCPECGKCYSQNSSLRSHQRVHTGQRPFSCGICGKSFSQRSALIPHARSHAREKPFKCPECGKRFGQSSVLAIHARTHLPGRTYSCPDCGKTFNRSSTLIQHQRSHTGERPYRCAVCGKGFCRSSTLLQHHRVHSGERPYKCDDCGKAFSQSSDLIRHQRTHAAGRR.

The span at 1–16 (MEREASSWGLESRDVH) shows a compositional bias: basic and acidic residues. Disordered regions lie at residues 1 to 223 (MERE…SLGV), 228 to 247 (SFTQ…FDMP), and 264 to 287 (LNLT…QGPR). 3 positions are modified to phosphoserine: Ser17, Ser23, and Ser27. The residue at position 35 (Thr35) is a Phosphothreonine. Phosphoserine is present on residues Ser36, Ser65, Ser72, Ser79, Ser86, Ser93, Ser100, Ser107, Ser114, Ser121, Ser128, Ser135, and Ser149. A compositionally biased stretch (low complexity) spans 62–80 (EPQSPEFEPQSPEFESQSP). Residues 110–122 (SDPQSPEFESQSP) are compositionally biased toward polar residues. Position 152 is a phosphotyrosine (Tyr152). Ser154 is subject to Phosphoserine. Positions 159-186 (FESQSPGYESQSPGYEPQNSGDGVQNSE) are enriched in polar residues. Thr189 carries the phosphothreonine modification. Ser191 bears the Phosphoserine mark. The C2H2-type 1 zinc-finger motif lies at 289 to 311 (NICGICGKSFGRGSTLIQHQRIH). Phosphothreonine is present on Thr312. At Tyr317 the chain carries Phosphotyrosine. 4 C2H2-type zinc fingers span residues 317-339 (YKCE…QRTH), 345-367 (YKCP…QRTH), 373-395 (YKCP…QRTH), and 401-423 (YSCP…QRVH). A phosphoserine mark is found at Ser323 and Ser327. Thr424 is subject to Phosphothreonine. C2H2-type zinc fingers lie at residues 429 to 451 (FSCG…ARSH), 457 to 479 (FKCP…ARTH), 485 to 507 (YSCP…QRSH), 513 to 535 (YRCA…HRVH), and 541 to 563 (YKCD…QRTH). A Phosphoserine modification is found at Ser470.

This sequence belongs to the krueppel C2H2-type zinc-finger protein family. As to quaternary structure, interacts (via zinc-finger domains) with TP53 (via N-terminus); interaction might be facilitated by TP53 oligomerization state. Interacts with ELP3. Post-translationally, may be phosphorylated at residue 'Ser-5' of the tandem heptapeptide repeats in the N-terminus. Phosphorylation might be increased upon RAS pathway activation and negatively regulate protein stability.

The protein localises to the nucleus. The protein resides in the chromosome. Functionally, binds to mammalian-wide interspersed repeat (MIRs) sequences in euchromatin and promoter regions of genes at the consensus sequence 5'-GCTGTGTG-[N20]-CCTCTCTG-3', consisting of two anchor regions connected by a linker region; the linker region probably does not contribute to the binding specificity. Required for cell homeostasis. May be involved in transcriptional regulation. This chain is Zinc finger protein 768 (Znf768), found in Mus musculus (Mouse).